Consider the following 266-residue polypeptide: Undecaprenyl-diphosphatase (266 aa).

The next 8 helical transmembrane spans lie at 1–21, 39–59, 87–107, 111–131, 144–164, 183–203, 218–238, and 246–266; these read MDTF…FLPI, QGLS…VMYF, WWII…KGFI, FRSI…LWWA, VGWK…IPGT, AAAR…AILV, ALGL…HYFL, and MTPF…FIFL.

Belongs to the UppP family.

It is found in the cell inner membrane. It catalyses the reaction di-trans,octa-cis-undecaprenyl diphosphate + H2O = di-trans,octa-cis-undecaprenyl phosphate + phosphate + H(+). Catalyzes the dephosphorylation of undecaprenyl diphosphate (UPP). Confers resistance to bacitracin. The protein is Undecaprenyl-diphosphatase of Shewanella halifaxensis (strain HAW-EB4).